The chain runs to 24 residues: FLPIIAGVAAKVFPKIFCAISKKC.

Cysteines 18 and 24 form a disulfide.

In terms of tissue distribution, expressed by the skin glands.

The protein resides in the secreted. In terms of biological role, antibacterial activity against Gram-positive bacterium S.aureus and Gram-negative bacterium E.coli. Has activity against C.albicans. The protein is Brevinin-1Pa of Lithobates pipiens (Northern leopard frog).